The primary structure comprises 417 residues: Laccase-like protein claX (417 aa).

It belongs to the multicopper oxidase family.

Its function is as follows. Laccase-like protein; part of the gene cluster that mediates the biosynthesis of clavilactone A, a meroterpenoid that features a unique benzo-fused ten-membered carbocyclic ring unit with an alpha,beta-epoxy-gamma-lactone moiety, forming an intriguing 10/5/3 tricyclic nested skeleton. ClaR, ClaS and ClaT are sufficient to produce clavilactone A and the function of claX, if any, has still to be identified. The biosynthesis begins with the prenyltransferase claS that transfers geranyl pyrophosphate (GPP) to hydroquinone to produces geranylhydroquinon. The cytochrome P450 monooxygenase claR then catalyzes the diradical coupling reaction between the intramolecular hydroquinone and allyl moieties to form the benzo-fused ten-membered carbocyclic ring unit of wigantol. Finally the cytochrome P450 monooxygenase claT exquisitely and stereoselectively assembles the alpha,beta-epoxy-gamma-lactone moiety, producing clavilactone A via arnebinol A. The chain is Laccase-like protein claX from Ampulloclitocybe clavipes (Club foot).